We begin with the raw amino-acid sequence, 605 residues long: Elongation factor 4 (605 aa).

The region spanning 9-192 (CRIRNFCIIA…SIVHRIPPPA (184 aa)) is the tr-type G domain. GTP is bound by residues 21–26 (DHGKST) and 139–142 (NKID).

The protein belongs to the TRAFAC class translation factor GTPase superfamily. Classic translation factor GTPase family. LepA subfamily.

Its subcellular location is the cell inner membrane. The catalysed reaction is GTP + H2O = GDP + phosphate + H(+). Required for accurate and efficient protein synthesis under certain stress conditions. May act as a fidelity factor of the translation reaction, by catalyzing a one-codon backward translocation of tRNAs on improperly translocated ribosomes. Back-translocation proceeds from a post-translocation (POST) complex to a pre-translocation (PRE) complex, thus giving elongation factor G a second chance to translocate the tRNAs correctly. Binds to ribosomes in a GTP-dependent manner. In Chlorobium chlorochromatii (strain CaD3), this protein is Elongation factor 4.